We begin with the raw amino-acid sequence, 516 residues long: 2-isopropylmalate synthase (516 aa).

A Pyruvate carboxyltransferase domain is found at valine 5–serine 267. Mn(2+) contacts are provided by aspartate 14, histidine 202, histidine 204, and asparagine 238. The interval lysine 392–valine 516 is regulatory domain.

Belongs to the alpha-IPM synthase/homocitrate synthase family. LeuA type 1 subfamily. In terms of assembly, homodimer. It depends on Mn(2+) as a cofactor.

Its subcellular location is the cytoplasm. The catalysed reaction is 3-methyl-2-oxobutanoate + acetyl-CoA + H2O = (2S)-2-isopropylmalate + CoA + H(+). Its pathway is amino-acid biosynthesis; L-leucine biosynthesis; L-leucine from 3-methyl-2-oxobutanoate: step 1/4. Functionally, catalyzes the condensation of the acetyl group of acetyl-CoA with 3-methyl-2-oxobutanoate (2-ketoisovalerate) to form 3-carboxy-3-hydroxy-4-methylpentanoate (2-isopropylmalate). This is 2-isopropylmalate synthase from Vibrio cholerae serotype O1 (strain ATCC 39315 / El Tor Inaba N16961).